The chain runs to 124 residues: Early nodulin-5 (124 aa).

Residues 1–12 (IIFSMWLLFSFS) form the signal peptide.

Functionally, involved in the infection process during the plant-rhizobium interaction. In Vicia sativa (Spring vetch), this protein is Early nodulin-5 (ENOD5).